Consider the following 660-residue polypeptide: MEVSGPEDDPFLSQLHQVQCPVCQQMMPAAHINSHLDRCLLLHPAGHAEPAAGSHRAGERAKGPSPPGAKRRRLSESSALKQPATPTAAESSEGEGEEGDDGGETESRESYDAPPTPSGARLIPDFPVARSSSPARKGMGKRPAAAAAAGSASPRSWDEAEAQEEEEAGVDGDGDADVDGEDDPGHWDADAADASFGVSAGRAHPRALAAEEIRQMLEGKPLADKMRPDTLQDYIGQSRAVGQETLLRSLLEANEIPSLILWGPPGCGKTTLAHIIANNSKKHSIRFVTLSATNAKTNDVRDVIKQAQNEKSFFKRKTILFIDEIHRFNKSQQDTFLPHVECGTITLIGATTENPSFQVNAALLSRCRVIVLEKLPVEAMVTILMRAINSLGIHVLDSSRPTDPLSHSSNCSSEPSVFIEDKAVDTLAYLSDGDARTGLNGLQLAVLARLSSRKVFCKKSGQTYSPSRVLITENDVKEGLQRSHILYDRAGEEHYNCISALHKAMRGSDQNASLYWLARMLEGGEDPLYVARRLVRFASEDIGLADPSALAQAVAAYQGCHFIGMPECEVLLAQCVVYFARAPKSIEVYSAYNNVKACLRSHQGPLPPVPLHLRNAPTRLMKDLGYGKGYKYNPMYSEPVDQDYLPEELRGVDFFKQRRC.

The UBZ4-type zinc-finger motif lies at 17–44 (QVQCPVCQQMMPAAHINSHLDRCLLLHP). Zn(2+)-binding residues include Cys-20, Cys-23, His-31, His-35, and Cys-39. The interval 48 to 191 (AEPAAGSHRA…DDPGHWDADA (144 aa)) is disordered. 2 positions are modified to phosphoserine: Ser-65 and Ser-75. Polar residues predominate over residues 76–89 (ESSALKQPATPTAA). A Glycyl lysine isopeptide (Lys-Gly) (interchain with G-Cter in ubiquitin) cross-link involves residue Lys-81. A Phosphothreonine modification is found at Thr-85. A phosphoserine mark is found at Ser-91 and Ser-92. Acidic residues predominate over residues 92–104 (SEGEGEEGDDGGE). At Thr-116 the chain carries Phosphothreonine. The segment covering 135–155 (ARKGMGKRPAAAAAAGSASPR) has biased composition (low complexity). Lys-141 participates in a covalent cross-link: Glycyl lysine isopeptide (Lys-Gly) (interchain with G-Cter in ubiquitin). Ser-153 bears the Phosphoserine mark. Acidic residues predominate over residues 159-182 (EAEAQEEEEAGVDGDGDADVDGED). Lys-220 is covalently cross-linked (Glycyl lysine isopeptide (Lys-Gly) (interchain with G-Cter in ubiquitin)). 265 to 271 (PGCGKTT) serves as a coordination point for ATP. Residues Lys-296, Lys-305, Lys-311, Lys-317, and Lys-330 each participate in a glycyl lysine isopeptide (Lys-Gly) (interchain with G-Cter in ubiquitin) cross-link. Lys-477 participates in a covalent cross-link: Glycyl lysine isopeptide (Lys-Gly) (interchain with G-Cter in SUMO2); alternate. Lys-477 participates in a covalent cross-link: Glycyl lysine isopeptide (Lys-Gly) (interchain with G-Cter in ubiquitin); alternate. Phosphotyrosine is present on residues Tyr-529 and Tyr-557. A Glycyl lysine isopeptide (Lys-Gly) (interchain with G-Cter in ubiquitin) cross-link involves residue Lys-622. Residue Lys-628 forms a Glycyl lysine isopeptide (Lys-Gly) (interchain with G-Cter in ubiquitin); alternate linkage. The residue at position 628 (Lys-628) is an N6-acetyllysine; alternate. Residue Lys-631 forms a Glycyl lysine isopeptide (Lys-Gly) (interchain with G-Cter in ubiquitin) linkage.

Belongs to the AAA ATPase family. RarA/MGS1/WRNIP1 subfamily. Forms homooligomers, possibly octamers. Directly interacts with POLD1, POLD2 and POLD4. Interacts with the N-terminal domain of WRN. Interacts (via UBZ4-type zinc finger) with monoubiquitin and polyubiquitin. Interacts with TRIM14 and PPP6C; these interactions positively regulate the RIGI signaling pathway. In terms of processing, sumoylated with SUMO1 and SUMO2/3. As to expression, ubiquitously expressed.

Its subcellular location is the nucleus. It localises to the cytoplasm. The catalysed reaction is ATP + H2O = ADP + phosphate + H(+). Its function is as follows. Functions as a modulator of initiation or reinitiation events during DNA polymerase delta-mediated DNA synthesis. In the presence of ATP, stimulation of DNA polymerase delta-mediated DNA synthesis is decreased. Also plays a role in the innate immune defense against viruses. Stabilizes the RIGI dsRNA interaction and promotes RIGI 'Lys-63'-linked polyubiquitination. In turn, RIGI transmits the signal through mitochondrial MAVS. The protein is ATPase WRNIP1 of Mus musculus (Mouse).